We begin with the raw amino-acid sequence, 316 residues long: Phosphate acyltransferase (316 aa).

The protein belongs to the PlsX family. As to quaternary structure, homodimer. Probably interacts with PlsY.

It is found in the cytoplasm. The enzyme catalyses a fatty acyl-[ACP] + phosphate = an acyl phosphate + holo-[ACP]. Its pathway is lipid metabolism; phospholipid metabolism. Catalyzes the reversible formation of acyl-phosphate (acyl-PO(4)) from acyl-[acyl-carrier-protein] (acyl-ACP). This enzyme utilizes acyl-ACP as fatty acyl donor, but not acyl-CoA. The polypeptide is Phosphate acyltransferase (Chlamydia caviae (strain ATCC VR-813 / DSM 19441 / 03DC25 / GPIC) (Chlamydophila caviae)).